The primary structure comprises 443 residues: F-box only protein 39 (443 aa).

Residues 13-59 (QSCWATLPDVCLRRVFWWLGDRDRSRAALVCRKWNQIMYSADLWRYR) form the F-box domain.

Directly interacts with SKP1 and CUL1.

Its function is as follows. Substrate-recognition component of the SCF (SKP1-CUL1-F-box protein)-type E3 ubiquitin ligase complex. This chain is F-box only protein 39 (Fbxo39), found in Mus musculus (Mouse).